A 235-amino-acid polypeptide reads, in one-letter code: Adenosine 5'-phosphosulfate reductase (235 aa).

[4Fe-4S] cluster contacts are provided by C121, C122, C204, and C207. C230 acts as the Nucleophile; cysteine thiosulfonate intermediate in catalysis.

The protein belongs to the PAPS reductase family. CysH subfamily. [4Fe-4S] cluster is required as a cofactor.

It is found in the cytoplasm. The enzyme catalyses [thioredoxin]-disulfide + sulfite + AMP + 2 H(+) = adenosine 5'-phosphosulfate + [thioredoxin]-dithiol. Its pathway is sulfur metabolism; hydrogen sulfide biosynthesis; sulfite from sulfate. In terms of biological role, catalyzes the formation of sulfite from adenosine 5'-phosphosulfate (APS) using thioredoxin as an electron donor. The protein is Adenosine 5'-phosphosulfate reductase of Anoxybacillus flavithermus (strain DSM 21510 / WK1).